The primary structure comprises 204 residues: High frequency lysogenization protein HflD homolog (204 aa).

It belongs to the HflD family.

It is found in the cytoplasm. The protein localises to the cell inner membrane. This is High frequency lysogenization protein HflD homolog from Shewanella woodyi (strain ATCC 51908 / MS32).